The chain runs to 114 residues: Nucleoid-associated protein SGR_3378 (114 aa).

It belongs to the YbaB/EbfC family. As to quaternary structure, homodimer.

The protein resides in the cytoplasm. Its subcellular location is the nucleoid. In terms of biological role, binds to DNA and alters its conformation. May be involved in regulation of gene expression, nucleoid organization and DNA protection. In Streptomyces griseus subsp. griseus (strain JCM 4626 / CBS 651.72 / NBRC 13350 / KCC S-0626 / ISP 5235), this protein is Nucleoid-associated protein SGR_3378.